The sequence spans 323 residues: Elongation factor P--(R)-beta-lysine ligase (323 aa).

76-78 is a substrate binding site; that stretch reads SPE. Residues 100-102 and Asn109 each bind ATP; that span reads RNE. Residue Tyr118 participates in substrate binding. 242–243 contributes to the ATP binding site; that stretch reads EL. Glu249 contacts substrate. Position 298 (Gly298) interacts with ATP.

This sequence belongs to the class-II aminoacyl-tRNA synthetase family. EpmA subfamily. Homodimer.

The catalysed reaction is D-beta-lysine + L-lysyl-[protein] + ATP = N(6)-((3R)-3,6-diaminohexanoyl)-L-lysyl-[protein] + AMP + diphosphate + H(+). With EpmB is involved in the beta-lysylation step of the post-translational modification of translation elongation factor P (EF-P). Catalyzes the ATP-dependent activation of (R)-beta-lysine produced by EpmB, forming a lysyl-adenylate, from which the beta-lysyl moiety is then transferred to the epsilon-amino group of a conserved specific lysine residue in EF-P. This is Elongation factor P--(R)-beta-lysine ligase from Mannheimia succiniciproducens (strain KCTC 0769BP / MBEL55E).